Consider the following 366-residue polypeptide: Prostaglandin F2-alpha receptor (366 aa).

The Extracellular segment spans residues 1–31; that stretch reads MSMNSSKQPVSPAAGLIANTTCQTENRLSVF. 2 N-linked (GlcNAc...) asparagine glycosylation sites follow: asparagine 4 and asparagine 19. Residues 32–55 traverse the membrane as a helical segment; sequence FSIIFMTVGILSNSLAIAILMKAY. Topologically, residues 56–69 are cytoplasmic; the sequence is QRFRQKSKASFLLL. A helical transmembrane segment spans residues 70 to 90; that stretch reads ASGLVITDFFGHLINGGIAVF. Residues 91–109 lie on the Extracellular side of the membrane; it reads VYASDKDWIRFDQSNILCS. A disulfide bridge links cysteine 108 with cysteine 186. Residues 110–131 form a helical membrane-spanning segment; the sequence is IFGISMVFSGLCPLFLGSAMAI. At 132 to 152 the chain is on the cytoplasmic side; sequence ERCIGVTNPIFHSTKITSKHV. Residues 153 to 175 traverse the membrane as a helical segment; it reads KMILSGVCMFAVFVAVLPILGHR. Topologically, residues 176 to 198 are extracellular; sequence DYQIQASRTWCFYNTEHIEDWED. A helical transmembrane segment spans residues 199 to 224; the sequence is RFYLLFFSFLGLLALGVSFSCNAVTG. Topologically, residues 225 to 250 are cytoplasmic; sequence VTLLRVKFRSQQHRQGRSHHLEMIIQ. A helical membrane pass occupies residues 251-267; that stretch reads LLAIMCVSCVCWSPFLV. Residues 268–285 lie on the Extracellular side of the membrane; it reads TMANIAINGNNSPVTCET. Residues 286 to 307 traverse the membrane as a helical segment; sequence TLFALRMATWNQILDPWVYILL. The Cytoplasmic segment spans residues 308-366; sequence RKAVLRNLYKLASRCCGVNIISLHIWELSSIKNSLKVAAISESPAAEKESQQASSEAGL.

It belongs to the G-protein coupled receptor 1 family.

The protein localises to the cell membrane. Receptor for prostaglandin F2-alpha (PGF2-alpha). The activity of this receptor is mediated by G proteins which activate a phosphatidylinositol-calcium second messenger system. Initiates luteolysis in the corpus luteum. The sequence is that of Prostaglandin F2-alpha receptor (Ptgfr) from Mus musculus (Mouse).